The sequence spans 223 residues: Octanoyltransferase (223 aa).

The BPL/LPL catalytic domain occupies 30–214; that stretch reads DLDRDCFLLT…IVADLFGEFT (185 aa). Substrate contacts are provided by residues 75 to 82, 144 to 146, and 157 to 159; these read RGGEITYH, SIG, and GFA. Cys175 serves as the catalytic Acyl-thioester intermediate.

This sequence belongs to the LipB family.

It is found in the cytoplasm. It catalyses the reaction octanoyl-[ACP] + L-lysyl-[protein] = N(6)-octanoyl-L-lysyl-[protein] + holo-[ACP] + H(+). Its pathway is protein modification; protein lipoylation via endogenous pathway; protein N(6)-(lipoyl)lysine from octanoyl-[acyl-carrier-protein]: step 1/2. Catalyzes the transfer of endogenously produced octanoic acid from octanoyl-acyl-carrier-protein onto the lipoyl domains of lipoate-dependent enzymes. Lipoyl-ACP can also act as a substrate although octanoyl-ACP is likely to be the physiological substrate. The chain is Octanoyltransferase from Desulfotalea psychrophila (strain LSv54 / DSM 12343).